Here is a 341-residue protein sequence, read N- to C-terminus: UDP-N-acetylenolpyruvoylglucosamine reductase (341 aa).

The region spanning 15 to 185 (LAQSCADLVE…TAVGLRLVKR (171 aa)) is the FAD-binding PCMH-type domain. Residue Arg-161 is part of the active site. The active-site Proton donor is the Ser-231. Glu-327 is an active-site residue.

Belongs to the MurB family. It depends on FAD as a cofactor.

It localises to the cytoplasm. The enzyme catalyses UDP-N-acetyl-alpha-D-muramate + NADP(+) = UDP-N-acetyl-3-O-(1-carboxyvinyl)-alpha-D-glucosamine + NADPH + H(+). The protein operates within cell wall biogenesis; peptidoglycan biosynthesis. Cell wall formation. This is UDP-N-acetylenolpyruvoylglucosamine reductase from Shewanella baltica (strain OS195).